A 448-amino-acid chain; its full sequence is Asparagine--tRNA ligase (448 aa).

Belongs to the class-II aminoacyl-tRNA synthetase family. As to quaternary structure, homodimer.

Its subcellular location is the cytoplasm. It catalyses the reaction tRNA(Asn) + L-asparagine + ATP = L-asparaginyl-tRNA(Asn) + AMP + diphosphate + H(+). In Streptococcus sanguinis (strain SK36), this protein is Asparagine--tRNA ligase.